The sequence spans 96 residues: Putative membrane protein insertion efficiency factor (96 aa).

A disordered region spans residues 68–96 (DPVPEHFPARHPRPQGSPPTDHPPTDQPS). Residues 82–96 (QGSPPTDHPPTDQPS) are compositionally biased toward pro residues.

The protein belongs to the UPF0161 family.

It is found in the cell membrane. Functionally, could be involved in insertion of integral membrane proteins into the membrane. The sequence is that of Putative membrane protein insertion efficiency factor from Deinococcus radiodurans (strain ATCC 13939 / DSM 20539 / JCM 16871 / CCUG 27074 / LMG 4051 / NBRC 15346 / NCIMB 9279 / VKM B-1422 / R1).